Consider the following 954-residue polypeptide: Xylanolytic transcriptional activator xlnR (954 aa).

Disordered regions lie at residues 1-39 and 51-93; these read MSTTSLQHFPHSYSPFSSSRSLNRMAQSQTSGLDTLAEG and REAA…SQRD. Positions 8–21 are enriched in low complexity; the sequence is HFPHSYSPFSSSRS. Residues 22–33 are compositionally biased toward polar residues; sequence LNRMAQSQTSGL. Basic and acidic residues predominate over residues 64 to 78; the sequence is GKPKDQFQVDNDNHH. Residues 82–91 are compositionally biased toward polar residues; the sequence is SLSNFKNPSQ. The segment at residues 119–145 is a DNA-binding region (zn(2)-C6 fungal-type); that stretch reads CDQCNQLRTKCDGQNPCAHCIDFGLTC. 4 disordered regions span residues 173 to 226, 310 to 333, 566 to 607, and 758 to 777; these read ATNS…HSEA, LMNPQEPNSTSISHFRLGSSTENP, ELPP…PGNT, and MDGSHPNHVSPSGRSSSTVE. Positions 174–183 are enriched in polar residues; the sequence is TNSGQPNGSS. Residues 574 to 590 are compositionally biased toward basic and acidic residues; the sequence is ARPDAERDGDPDADLSK. Over residues 764-777 the composition is skewed to polar residues; it reads NHVSPSGRSSSTVE.

It belongs to the xlnR/xlr1 family.

It localises to the nucleus. Functionally, transcriptional activator of the xylanolytic system. Involved in the regulation of extracellular cellulolytic and xylanolytic genes and in the regulation of the intracellular activities of D-xylose catabolic genes in the pentose catabolic pathway (PCP) in response to the presence of D-xylose. The polypeptide is Xylanolytic transcriptional activator xlnR (xlnR) (Aspergillus fumigatus (strain ATCC MYA-4609 / CBS 101355 / FGSC A1100 / Af293) (Neosartorya fumigata)).